The sequence spans 299 residues: ClpXP adapter protein SpxH (299 aa).

It belongs to the SpxH family. In terms of assembly, interacts with Spx. Interacts with SpxO/YuzO.

It is found in the cytoplasm. Irreversible aggregation upon several stress conditions prevents interaction with Spx and therefore leads to Spx stabilization. Inhibited by interaction with SpxO/YuzO. Functionally, adapter protein required for efficient degradation of Spx by ClpXP under non-stress conditions. Interaction with Spx stabilizes Spx and exposes the C-terminus of Spx for recognition and proteolysis by ClpXP. Is specific for Spx and does not enhance proteolysis by ClpCP protease. Probably binds 2 zinc ions. The chain is ClpXP adapter protein SpxH from Bacillus subtilis (strain 168).